We begin with the raw amino-acid sequence, 96 residues long: Large ribosomal subunit protein eL43 (96 aa).

A C4-type zinc finger spans residues 39 to 60 (CTFCGKTATKRTCVGIWKCKKC).

It belongs to the eukaryotic ribosomal protein eL43 family. Component of the large ribosomal subunit. Mature ribosomes consist of a small (40S) and a large (60S) subunit. The 40S subunit contains about 32 different proteins and 1 molecule of RNA (18S). The 60S subunit contains about 42 different proteins and 3 molecules of RNA (28S, 5.8S and 5S).

Its subcellular location is the cytoplasm. Component of the ribosome, a large ribonucleoprotein complex responsible for the synthesis of proteins in the cell. The small ribosomal subunit (SSU) binds messenger RNAs (mRNAs) and translates the encoded message by selecting cognate aminoacyl-transfer RNA (tRNA) molecules. The large subunit (LSU) contains the ribosomal catalytic site termed the peptidyl transferase center (PTC), which catalyzes the formation of peptide bonds, thereby polymerizing the amino acids delivered by tRNAs into a polypeptide chain. The nascent polypeptides leave the ribosome through a tunnel in the LSU and interact with protein factors that function in enzymatic processing, targeting, and the membrane insertion of nascent chains at the exit of the ribosomal tunnel. The polypeptide is Large ribosomal subunit protein eL43 (Plasmodium falciparum (isolate 3D7)).